The sequence spans 204 residues: Phosphatidylserine decarboxylase proenzyme (204 aa).

S169 (schiff-base intermediate with substrate; via pyruvic acid) is an active-site residue. S169 carries the pyruvic acid (Ser); by autocatalysis modification.

Belongs to the phosphatidylserine decarboxylase family. PSD-A subfamily. In terms of assembly, heterodimer of a large membrane-associated beta subunit and a small pyruvoyl-containing alpha subunit. The cofactor is pyruvate. Is synthesized initially as an inactive proenzyme. Formation of the active enzyme involves a self-maturation process in which the active site pyruvoyl group is generated from an internal serine residue via an autocatalytic post-translational modification. Two non-identical subunits are generated from the proenzyme in this reaction, and the pyruvate is formed at the N-terminus of the alpha chain, which is derived from the carboxyl end of the proenzyme. The post-translation cleavage follows an unusual pathway, termed non-hydrolytic serinolysis, in which the side chain hydroxyl group of the serine supplies its oxygen atom to form the C-terminus of the beta chain, while the remainder of the serine residue undergoes an oxidative deamination to produce ammonia and the pyruvoyl prosthetic group on the alpha chain.

Its subcellular location is the cell membrane. It carries out the reaction a 1,2-diacyl-sn-glycero-3-phospho-L-serine + H(+) = a 1,2-diacyl-sn-glycero-3-phosphoethanolamine + CO2. It participates in phospholipid metabolism; phosphatidylethanolamine biosynthesis; phosphatidylethanolamine from CDP-diacylglycerol: step 2/2. Catalyzes the formation of phosphatidylethanolamine (PtdEtn) from phosphatidylserine (PtdSer). The protein is Phosphatidylserine decarboxylase proenzyme of Solibacter usitatus (strain Ellin6076).